The primary structure comprises 276 residues: Hydroxycinnamoyl-CoA hydratase-lyase (276 aa).

Residues Lys29, Ala68, Met70, and Leu72 each contribute to the acetyl-CoA site. Position 75 (Tyr75) interacts with vanillin. 3 residues coordinate acetyl-CoA: Gly120, Ser142, and Trp146. Vanillin is bound by residues Gly151 and Tyr239.

This sequence belongs to the enoyl-CoA hydratase/isomerase family. Homohexamer; dimer of trimers.

It catalyses the reaction (E)-feruloyl-CoA + H2O = vanillin + acetyl-CoA. It carries out the reaction (E)-caffeoyl-CoA + H2O = 3,4-dihydroxybenzaldehyde + acetyl-CoA. The catalysed reaction is (E)-4-coumaroyl-CoA + H2O = 4-hydroxybenzaldehyde + acetyl-CoA. The enzyme catalyses (E)-feruloyl-CoA + H2O = 3-hydroxy-3-(4-hydroxy-3-methoxyphenyl)propanoyl-CoA. It catalyses the reaction 3-hydroxy-3-(4-hydroxy-3-methoxyphenyl)propanoyl-CoA = vanillin + acetyl-CoA. It carries out the reaction (E)-caffeoyl-CoA + H2O = 3-hydroxy-3-(3,4-dihydroxyphenyl)propanoyl-CoA. The catalysed reaction is 3-hydroxy-3-(3,4-dihydroxyphenyl)propanoyl-CoA = 3,4-dihydroxybenzaldehyde + acetyl-CoA. The enzyme catalyses (E)-4-coumaroyl-CoA + H2O = 3-hydroxy-3-(4-hydroxyphenyl)propanoyl-CoA. It catalyses the reaction 3-hydroxy-3-(4-hydroxyphenyl)propanoyl-CoA = 4-hydroxybenzaldehyde + acetyl-CoA. Functionally, catalyzes the hydration of the acyl-CoA thioester of ferulic acid and the subsequent retro-aldol cleavage of the hydrated intermediate to yield vanillin (4-hydroxy-3-methoxy-benzaldehyde). The enzyme is also active with caffeoyl-CoA and 4-coumaroyl-CoA producing 3,4-dihydroxybenzaldehyde and 4-hydroxybenzaldehyde, respectively. This Pseudomonas fluorescens protein is Hydroxycinnamoyl-CoA hydratase-lyase.